The following is a 1391-amino-acid chain: MSALLAGARFLLRPGLRALPAPCVRLSPGQGRYLNNTPGHFAIAAQQKGHIHEEPVSAVRAKQAQQFDWALNKLDSSVRRTGRITKTLLQKIFHDVCRTGYPSSNQALLLLRSCGSLLPELQMSERTEMAHRIWEKLQELGAVFDVSHYNALLKVYLQNEHKFSPTEYLAKMEAANVQPNRVTYQRLIAAYCNEGDIEGASKILGFMKNKDLPITEAVFNTLVTGHARAGDMENAKNILSVMRSAGIEPGPETYVALLTAYAEKGDINNIKQTLENVEKNEGSLTDRDLMQVIWSLAKAGYPQYVQDIVERMRYDRGYIPDAMNLCLSLMTQGFEDVAFLVLKSFSAASHDSPNGDSLHHGNFFLRHCVNLDKPANKVKQFCDGLKEENLHSAPLQFALYCSLDAKKADLALELMKMMKQEGMPVRPHYCWPLLISFQKEKNAEGTIKVIKALSEIGVELDVETYSNYVLSVFNDVKSARAQLQEHGCTVDSSWFNLAELRHDAVSGNLEEVYSLLSSPSFPSVDLGHFRGSLITAFKRSNNVDLKAKITELLYKDGRYCQAASGPNEAVGYFLYNLIDSMSDAEVQAKEEHLRQYFHQLKNANIVISANIYRGIRNLLDSSHVPELIKDVIVLVDSQETLTSSDIAKSAELKASTLEEEIETLKAENKPFGDVLKQLVMIHCSEENMQKALEVKAKYEQENLAIGTYAALIQLCCRHDNPDEALNLKQELNRKDSSAVLDTSKYLALVKVFGKNGRIADAINVLKEMKEKDVPLKETTTTSFFHILNAAALRGDAETVDKIHESIVTLGLAKPTSNLCSPLVSVHLEKGDLPAAMETLFTCSKKYNCMPRLHDVLCRLVEKGDTDLLQKAMDHISQERGEMAMLYDLLFAFLHTGKYKEARKIIETPGLRARPGRLQWFAEKCIATNQMEALENLVDMTQKLFECDRDDMYYYLLKLCKENDDWKKADSAWTKIQEENVIPRERTLRLLADIFRRNGQEVPFDVPETWYKDAAESKVLASSSAPSSPESSFQKRVQVLSKKNRAKDAYEAFMEGENNGTAMSASAYSSLIRSMLSEGMLEEAKKVLNTAENHIKGFTLNDAASSLLIITQVRRDYLKDALASLKAMLEGDKVPTQLAVTRLVQALALKGDLEGIEVVENMMRNIGSSIRLSQMLFINNKMLAHLKRGKTEEAIELIEPLYTGTDSQVTSISYVFRKAMEEKMESALEKLSGMAERLANQFAVYRPVTDLFLQYIQVGRKDDARFLLQRCGSIAEQTPVLVSFISRSAQIPGQAQLIKDLLELIPEFSERETAYSYLMKCYATDKDATAATALYEKMKSESVSPDELFLKRLAVLLREAGEPVPFSEPPESFKFYADKLKKDKADSYDDEH.

Residues 1–42 constitute a mitochondrion transit peptide; the sequence is MSALLAGARFLLRPGLRALPAPCVRLSPGQGRYLNNTPGHFA. 15 PPR repeats span residues 110–144, 145–179, 180–214, 215–249, 250–284, 389–425, 704–738, 741–775, 779–813, 815–850, 948–982, 1028–1062, 1063–1093, 1100–1134, and 1310–1344; these read LLRS…GAVF, DVSH…NVQP, NRVT…DLPI, TEAV…GIEP, GPET…EGSL, NLHS…GMPV, AIGT…DSSA, DTSK…DVPL, TTTS…GLAK, TSNL…NCMP, RDDM…NVIP, PESS…GTAM, SASA…AENH, NDAA…DKVP, and RETA…SVSP. An RNA-binding region spans residues 1118–1387; the sequence is KDALASLKAM…KLKKDKADSY (270 aa).

It is found in the mitochondrion. The protein localises to the nucleus. Its function is as follows. May play a role in RNA metabolism in both nuclei and mitochondria. May bind mature mRNA in the nucleus outer membrane. In mitochondria binds to poly(A) mRNA. May be involved in transcription regulation. Binds single-stranded DNA. The chain is Leucine-rich PPR motif-containing protein, mitochondrial (lrpprc) from Xenopus tropicalis (Western clawed frog).